Here is a 159-residue protein sequence, read N- to C-terminus: Regulatory protein RecX (159 aa).

It belongs to the RecX family.

The protein resides in the cytoplasm. Its function is as follows. Modulates RecA activity. This is Regulatory protein RecX from Chlorobium limicola (strain DSM 245 / NBRC 103803 / 6330).